The following is a 266-amino-acid chain: Streptomycin 3''-kinase (266 aa).

Asp-154 functions as the Proton acceptor in the catalytic mechanism.

The protein belongs to the aminoglycoside phosphotransferase family.

The enzyme catalyses streptomycin + ATP = streptomycin 3''-phosphate + ADP + H(+). Its function is as follows. The aminoglycoside phosphotransferases achieve inactivation of their antibiotic substrates by phosphorylation. The protein is Streptomycin 3''-kinase (str) of Klebsiella pneumoniae.